The following is a 187-amino-acid chain: Peptide deformylase (187 aa).

2 residues coordinate Fe cation: Cys114 and His157. Glu158 is a catalytic residue. His161 lines the Fe cation pocket.

The protein belongs to the polypeptide deformylase family. Fe(2+) is required as a cofactor.

It catalyses the reaction N-terminal N-formyl-L-methionyl-[peptide] + H2O = N-terminal L-methionyl-[peptide] + formate. Its function is as follows. Removes the formyl group from the N-terminal Met of newly synthesized proteins. Requires at least a dipeptide for an efficient rate of reaction. N-terminal L-methionine is a prerequisite for activity but the enzyme has broad specificity at other positions. The polypeptide is Peptide deformylase (Enterococcus faecalis (strain ATCC 700802 / V583)).